The following is a 255-amino-acid chain: Placenta-expressed transcript 1 protein (255 aa).

Positions 1–26 are cleaved as a signal peptide; it reads MPALRTLLPHLGLFLCLALCFSPSFS. N-linked (GlcNAc...) asparagine glycosylation is found at Asn57, Asn67, and Asn126. Ser236 carries GPI-anchor amidated serine lipidation. Residues 237-255 constitute a propeptide, removed in mature form; the sequence is PLAGALHILLVFLISKLLF.

N-glycosylated. In terms of processing, GPI-anchored.

The protein localises to the apical cell membrane. Its function is as follows. Modulates leading keratinocyte migration and cellular adhesion to matrix proteins during a wound-healing response and promotes wound repair. May play a role during trichilemmal differentiation of the hair follicle. In Rattus norvegicus (Rat), this protein is Placenta-expressed transcript 1 protein (Plet1).